Here is an 81-residue protein sequence, read N- to C-terminus: Salivary thrombin inhibitor anophelin (81 aa).

Residues Met1 to Ala22 form the signal peptide. Residue Asn45 is glycosylated (N-linked (GlcNAc...) asparagine). The tract at residues Asp70–Arg73 is blocks active site cleft of host thrombin in a reverse direction compared to substrates.

Belongs to the anophelin family. As to quaternary structure, interacts with human F2 (thrombin); the interaction results in thrombin inhibition.

It is found in the secreted. Its function is as follows. Salivary protein with anticoagulant activity that inhibits host thrombin (F2). The chain is Salivary thrombin inhibitor anophelin from Anopheles darlingi (Mosquito).